Here is a 263-residue protein sequence, read N- to C-terminus: Copper homeostasis protein cutC homolog (263 aa).

The protein belongs to the CutC family.

Involved in copper homeostasis. The chain is Copper homeostasis protein cutC homolog from Drosophila melanogaster (Fruit fly).